Here is a 377-residue protein sequence, read N- to C-terminus: RIB43A-like with coiled-coils protein 2 (377 aa).

Coiled coils occupy residues 217 to 250 (NKNQ…LRGD) and 282 to 308 (EEIR…RDMD).

The protein belongs to the RIB43A family. As to quaternary structure, microtubule inner protein component of sperm flagellar doublet microtubules. In terms of tissue distribution, expressed in trachea multiciliated cells.

The protein localises to the cytoplasm. It is found in the cytoskeleton. The protein resides in the cilium axoneme. Its subcellular location is the flagellum axoneme. Functionally, microtubule inner protein (MIP) part of the dynein-decorated doublet microtubules (DMTs) in cilia axoneme, which is required for motile cilia beating. In Bos taurus (Bovine), this protein is RIB43A-like with coiled-coils protein 2.